Here is a 152-residue protein sequence, read N- to C-terminus: Ribosome maturation factor RimP (152 aa).

Belongs to the RimP family.

The protein localises to the cytoplasm. In terms of biological role, required for maturation of 30S ribosomal subunits. The chain is Ribosome maturation factor RimP from Desulfitobacterium hafniense (strain Y51).